Here is a 486-residue protein sequence, read N- to C-terminus: Glutamyl-tRNA(Gln) amidotransferase subunit A (486 aa).

Residues lysine 77 and serine 152 each act as charge relay system in the active site. Serine 176 acts as the Acyl-ester intermediate in catalysis.

Belongs to the amidase family. GatA subfamily. In terms of assembly, heterotrimer of A, B and C subunits.

It catalyses the reaction L-glutamyl-tRNA(Gln) + L-glutamine + ATP + H2O = L-glutaminyl-tRNA(Gln) + L-glutamate + ADP + phosphate + H(+). Its function is as follows. Allows the formation of correctly charged Gln-tRNA(Gln) through the transamidation of misacylated Glu-tRNA(Gln) in organisms which lack glutaminyl-tRNA synthetase. The reaction takes place in the presence of glutamine and ATP through an activated gamma-phospho-Glu-tRNA(Gln). The chain is Glutamyl-tRNA(Gln) amidotransferase subunit A from Pediococcus pentosaceus (strain ATCC 25745 / CCUG 21536 / LMG 10740 / 183-1w).